We begin with the raw amino-acid sequence, 326 residues long: ATP synthase gamma chain (326 aa).

Belongs to the ATPase gamma chain family. F-type ATPases have 2 components, CF(1) - the catalytic core - and CF(0) - the membrane proton channel. CF(1) has five subunits: alpha(3), beta(3), gamma(1), delta(1), epsilon(1). CF(0) has three main subunits: a, b and c.

Its subcellular location is the cell membrane. Functionally, produces ATP from ADP in the presence of a proton gradient across the membrane. The gamma chain is believed to be important in regulating ATPase activity and the flow of protons through the CF(0) complex. The sequence is that of ATP synthase gamma chain from Corynebacterium efficiens (strain DSM 44549 / YS-314 / AJ 12310 / JCM 11189 / NBRC 100395).